We begin with the raw amino-acid sequence, 562 residues long: Gut esterase 1 (562 aa).

The first 16 residues, 1–16 (MRVLLASLLIFGACWA), serve as a signal peptide directing secretion. A disulfide bridge links Cys-75 with Cys-93. Ser-199 functions as the Acyl-ester intermediate in the catalytic mechanism. Cys-251 and Cys-259 form a disulfide bridge. Residues Glu-320 and His-451 each act as charge relay system in the active site. The Prevents secretion from ER motif lies at 559–562 (KDEL).

This sequence belongs to the type-B carboxylesterase/lipase family. In terms of tissue distribution, expressed only in the intestine.

It localises to the endoplasmic reticulum lumen. The enzyme catalyses a carboxylic ester + H2O = an alcohol + a carboxylate + H(+). In Caenorhabditis briggsae, this protein is Gut esterase 1 (ges-1).